The following is a 160-amino-acid chain: Cytochrome b6-f complex subunit 4 (160 aa).

The next 3 helical transmembrane spans lie at leucine 36–valine 56, leucine 95–glutamate 115, and threonine 131–isoleucine 151.

This sequence belongs to the cytochrome b family. PetD subfamily. As to quaternary structure, the 4 large subunits of the cytochrome b6-f complex are cytochrome b6, subunit IV (17 kDa polypeptide, petD), cytochrome f and the Rieske protein, while the 4 small subunits are petG, petL, petM and petN. The complex functions as a dimer.

Its subcellular location is the plastid. It is found in the chloroplast thylakoid membrane. Component of the cytochrome b6-f complex, which mediates electron transfer between photosystem II (PSII) and photosystem I (PSI), cyclic electron flow around PSI, and state transitions. This is Cytochrome b6-f complex subunit 4 from Chlorella vulgaris (Green alga).